The following is a 509-amino-acid chain: Probable aspartic-type endopeptidase CTSD (509 aa).

A signal peptide spans 1–21 (MQFLWLCLLSAVTLQFTGTLA). Residues 102 to 408 (YFSEVKVGSE…DFDKNRVGLA (307 aa)) form the Peptidase A1 domain. Asp-120 is an active-site residue. N-linked (GlcNAc...) asparagine glycosylation is present at Asn-174. Asp-302 is an active-site residue. A glycan (N-linked (GlcNAc...) asparagine) is linked at Asn-361. Residues 451–489 (NKAPSGGSPGLPAESGSDSTTNGEATNGATSSPNSSSSV) form a disordered region. The span at 466-480 (GSDSTTNGEATNGAT) shows a compositional bias: polar residues. Asn-484 carries an N-linked (GlcNAc...) asparagine glycan. Ser-485 carries the GPI-anchor amidated serine lipid modification. A propeptide spans 486–509 (SSSVLTPTWLTLAVFFAIGSSLWS) (removed in mature form).

Belongs to the peptidase A1 family.

The protein resides in the cell membrane. Its function is as follows. Probable GPI-anchored aspartic-type endopeptidase which contributes to virulence. This Trichophyton verrucosum (strain HKI 0517) protein is Probable aspartic-type endopeptidase CTSD (CTSD).